The following is a 641-amino-acid chain: Protein GAMETE EXPRESSED 3 (641 aa).

Residues 1-29 (MVAFRFVYIPLPFFFFFFFFFVFFSGVSQ) form the signal peptide. The helical transmembrane segment at 441–461 (IIWFLLFEFVIMVLFAALVRF) threads the bilayer. The disordered stretch occupies residues 570–627 (ITIFQTPSDESSSEESYRDEHYDDVADDEHDEDDLDRKQKGKLLAHSEGSSNDGDGIA). The span at 584–593 (ESYRDEHYDD) shows a compositional bias: basic and acidic residues. Residues 594-603 (VADDEHDEDD) show a composition bias toward acidic residues.

As to expression, expressed in mature siliques and in pollen, mainly in the sperm cells. Detected in the egg cell within the female gametophyte.

The protein resides in the cell membrane. Required for micropylar pollen tube guidance. Plays a role during early embryo patterning. The protein is Protein GAMETE EXPRESSED 3 (GEX3) of Arabidopsis thaliana (Mouse-ear cress).